A 209-amino-acid chain; its full sequence is Glycolipid transfer protein B (209 aa).

2 consecutive repeat copies span residues 45-55 and 56-66. The tract at residues 45–66 is 2 X 12 AA approximate tandem repeats; that stretch reads IKADITGNITKIRSVYESNPTQ. Residue 48-55 coordinates beta-D-galactosyl-(1-&gt;4)-beta-D-glucosyl-(1&lt;-&gt;1)-N-[(9Z)-octadecenoyl]-sphing-4-enine; that stretch reads DITGNITK. 2 residues coordinate beta-D-galactosyl-(1-&gt;4)-beta-D-glucosyl-(1&lt;-&gt;1)-N-[(9Z)-octadecenoyl]-sphing-4-enine: His-140 and Tyr-207.

Belongs to the GLTP family.

It is found in the cytoplasm. Accelerates the intermembrane transfer of various glycolipids. Catalyzes the transfer of various glycosphingolipids between membranes but does not catalyze the transfer of phospholipids. May be involved in the intracellular translocation of glucosylceramides. This is Glycolipid transfer protein B (gltp-b) from Xenopus laevis (African clawed frog).